The chain runs to 242 residues: Large ribosomal subunit protein uL1 (242 aa).

Belongs to the universal ribosomal protein uL1 family. Part of the 50S ribosomal subunit.

Binds directly to 23S rRNA. The L1 stalk is quite mobile in the ribosome, and is involved in E site tRNA release. Its function is as follows. Protein L1 is also a translational repressor protein, it controls the translation of the L11 operon by binding to its mRNA. This is Large ribosomal subunit protein uL1 from Sulfurihydrogenibium sp. (strain YO3AOP1).